A 107-amino-acid polypeptide reads, in one-letter code: Theromyzin (107 aa).

The N-terminal stretch at 1-21 is a signal peptide; it reads MHAKIILALFLGMTAFLAVQA.

In terms of tissue distribution, coelomic liquid (at protein level). Expressed in large fat cells in contact with coelomic cavities, in intestinal epithelia and at the epidermis level.

The protein resides in the secreted. In terms of biological role, has bacteriostatic activity against M.luteus. No activity toward E.coli and F.oxysporum. This Theromyzon tessulatum (Duck leech) protein is Theromyzin.